The sequence spans 240 residues: Phosducin-like protein 2 (240 aa).

The 164-residue stretch at 38 to 201 folds into the Phosducin domain; it reads QQEAMVKPYE…LEWKLSEVGA (164 aa). The interval 89 to 240 is thioredoxin fold; sequence FGELREISGN…DSSGSDTEAK (152 aa).

It belongs to the phosducin family. As to quaternary structure, interacts with the CCT chaperonin complex and actin. In terms of tissue distribution, testis-specific (at protein level).

The protein localises to the endoplasmic reticulum. Functionally, essential for male fertility, spermiogenesis and acrosome formation. The chain is Phosducin-like protein 2 (Pdcl2) from Mus musculus (Mouse).